Consider the following 329-residue polypeptide: DNA-directed RNA polymerase subunit alpha (329 aa).

The tract at residues 1-235 (MQGSVTEFLK…EQLEAFVDLR (235 aa)) is alpha N-terminal domain (alpha-NTD). The segment at 249–329 (FDPILLRPVD…DWPPASIADE (81 aa)) is alpha C-terminal domain (alpha-CTD).

Belongs to the RNA polymerase alpha chain family. Homodimer. The RNAP catalytic core consists of 2 alpha, 1 beta, 1 beta' and 1 omega subunit. When a sigma factor is associated with the core the holoenzyme is formed, which can initiate transcription.

It catalyses the reaction RNA(n) + a ribonucleoside 5'-triphosphate = RNA(n+1) + diphosphate. Functionally, DNA-dependent RNA polymerase catalyzes the transcription of DNA into RNA using the four ribonucleoside triphosphates as substrates. The sequence is that of DNA-directed RNA polymerase subunit alpha from Salmonella choleraesuis (strain SC-B67).